The primary structure comprises 105 residues: BLOC-1-related complex subunit 7 (105 aa).

This sequence belongs to the BORCS7 family. In terms of assembly, component of the BLOC-one-related complex (BORC) which is composed of BLOC1S1, BLOC1S2, BORCS5, BORCS6, BORCS7, BORCS8, KXD1 and SNAPIN.

It localises to the lysosome membrane. Its function is as follows. As part of the BORC complex may play a role in lysosomes movement and localization at the cell periphery. Associated with the cytosolic face of lysosomes, the BORC complex may recruit ARL8B and couple lysosomes to microtubule plus-end-directed kinesin motor. This chain is BLOC-1-related complex subunit 7, found in Bos taurus (Bovine).